Reading from the N-terminus, the 53-residue chain is uncharacterized protein (53 aa).

This is an uncharacterized protein from Plasmodium falciparum (isolate fcm17 / Senegal).